The primary structure comprises 147 residues: 3-dehydroquinate dehydratase (147 aa).

The active-site Proton acceptor is Tyr23. The substrate site is built by Asn74, His80, and Asp87. His100 serves as the catalytic Proton donor. Substrate is bound by residues 101-102 (LS) and Arg111.

Belongs to the type-II 3-dehydroquinase family. In terms of assembly, homododecamer.

The enzyme catalyses 3-dehydroquinate = 3-dehydroshikimate + H2O. It participates in metabolic intermediate biosynthesis; chorismate biosynthesis; chorismate from D-erythrose 4-phosphate and phosphoenolpyruvate: step 3/7. In terms of biological role, catalyzes a trans-dehydration via an enolate intermediate. In Clostridium botulinum (strain ATCC 19397 / Type A), this protein is 3-dehydroquinate dehydratase.